Here is a 345-residue protein sequence, read N- to C-terminus: N-acetyl-gamma-glutamyl-phosphate reductase (345 aa).

The active site involves Cys-149.

It belongs to the NAGSA dehydrogenase family. Type 1 subfamily.

It localises to the cytoplasm. It catalyses the reaction N-acetyl-L-glutamate 5-semialdehyde + phosphate + NADP(+) = N-acetyl-L-glutamyl 5-phosphate + NADPH + H(+). It functions in the pathway amino-acid biosynthesis; L-arginine biosynthesis; N(2)-acetyl-L-ornithine from L-glutamate: step 3/4. Its function is as follows. Catalyzes the NADPH-dependent reduction of N-acetyl-5-glutamyl phosphate to yield N-acetyl-L-glutamate 5-semialdehyde. The protein is N-acetyl-gamma-glutamyl-phosphate reductase of Bacillus mycoides (strain KBAB4) (Bacillus weihenstephanensis).